Reading from the N-terminus, the 342-residue chain is Cyclin-D3-1 (342 aa).

Polar residues predominate over residues 322–334; the sequence is VGSPATNYESSAS. A disordered region spans residues 322–342; sequence VGSPATNYESSASSKRRRICR.

This sequence belongs to the cyclin family. Cyclin D subfamily.

This Oryza sativa subsp. japonica (Rice) protein is Cyclin-D3-1 (CYCD3-1).